The sequence spans 623 residues: Kelch-like protein diablo (623 aa).

Residues 1–54 (MGDLPGSGSTAQPRDAAVTGTGGNSTAGGGSSVGSTAVDRPPSPARLSHTSEKH) are disordered. At threonine 19 the chain carries Phosphothreonine. Gly residues predominate over residues 20-32 (GTGGNSTAGGGSS). Positions 72–139 (CDVVLNVGGR…CYTAHIIVEE (68 aa)) constitute a BTB domain. The BACK domain occupies 174–276 (CLGIRAFADT…SPKFLVGTVG (103 aa)). 6 Kelch repeats span residues 323-369 (VLFA…VLND), 371-417 (LYAV…VLDE), 418-464 (FLYA…VLGG), 466-511 (LYAI…VFNN), 513-558 (IYAV…VVNG), and 559-605 (QLYA…VMRA).

It functions in the pathway protein modification; protein ubiquitination. In terms of biological role, probable substrate-specific adapter of an E3 ubiquitin-protein ligase complex which mediates the ubiquitination and subsequent proteasomal degradation of target proteins. May have a role in synapse differentiation and growth. The polypeptide is Kelch-like protein diablo (Drosophila simulans (Fruit fly)).